The primary structure comprises 550 residues: CTP synthase (550 aa).

An amidoligase domain region spans residues methionine 1–leucine 265. Serine 13 contacts CTP. Serine 13 provides a ligand contact to UTP. Serine 14–isoleucine 19 provides a ligand contact to ATP. Tyrosine 54 provides a ligand contact to L-glutamine. Aspartate 71 lines the ATP pocket. Positions 71 and 139 each coordinate Mg(2+). Residues aspartate 146–glutamate 148, lysine 186–glutamine 191, and lysine 222 each bind CTP. Residues lysine 186 to glutamine 191 and lysine 222 each bind UTP. Positions threonine 290–arginine 541 constitute a Glutamine amidotransferase type-1 domain. Glycine 351 contributes to the L-glutamine binding site. Cysteine 378 acts as the Nucleophile; for glutamine hydrolysis in catalysis. L-glutamine-binding positions include leucine 379–glutamine 382, glutamate 402, and arginine 469. Catalysis depends on residues histidine 514 and glutamate 516.

It belongs to the CTP synthase family. In terms of assembly, homotetramer.

The enzyme catalyses UTP + L-glutamine + ATP + H2O = CTP + L-glutamate + ADP + phosphate + 2 H(+). It carries out the reaction L-glutamine + H2O = L-glutamate + NH4(+). It catalyses the reaction UTP + NH4(+) + ATP = CTP + ADP + phosphate + 2 H(+). It functions in the pathway pyrimidine metabolism; CTP biosynthesis via de novo pathway; CTP from UDP: step 2/2. With respect to regulation, allosterically activated by GTP, when glutamine is the substrate; GTP has no effect on the reaction when ammonia is the substrate. The allosteric effector GTP functions by stabilizing the protein conformation that binds the tetrahedral intermediate(s) formed during glutamine hydrolysis. Inhibited by the product CTP, via allosteric rather than competitive inhibition. Its function is as follows. Catalyzes the ATP-dependent amination of UTP to CTP with either L-glutamine or ammonia as the source of nitrogen. Regulates intracellular CTP levels through interactions with the four ribonucleotide triphosphates. The protein is CTP synthase of Nitrosococcus oceani (strain ATCC 19707 / BCRC 17464 / JCM 30415 / NCIMB 11848 / C-107).